The sequence spans 80 residues: DNA-binding protein HU-like (80 aa).

Belongs to the bacterial histone-like protein family.

Functionally, histone-like DNA-binding protein which is capable of wrapping DNA to stabilize it, and thus to prevent its denaturation under extreme environmental conditions. The protein is DNA-binding protein HU-like of Rickettsia prowazekii (strain Madrid E).